Reading from the N-terminus, the 141-residue chain is Large ribosomal subunit protein uL11 (141 aa).

Belongs to the universal ribosomal protein uL11 family. In terms of assembly, part of the ribosomal stalk of the 50S ribosomal subunit. Interacts with L10 and the large rRNA to form the base of the stalk. L10 forms an elongated spine to which L12 dimers bind in a sequential fashion forming a multimeric L10(L12)X complex. Post-translationally, one or more lysine residues are methylated.

Forms part of the ribosomal stalk which helps the ribosome interact with GTP-bound translation factors. This Campylobacter jejuni subsp. jejuni serotype O:6 (strain 81116 / NCTC 11828) protein is Large ribosomal subunit protein uL11.